A 195-amino-acid chain; its full sequence is Imidazole glycerol phosphate synthase subunit HisH 2 (195 aa).

Residues 2 to 195 (KIIIIDTACA…LISNFIKDIG (194 aa)) enclose the Glutamine amidotransferase type-1 domain. Cysteine 77 (nucleophile) is an active-site residue. Residues histidine 175 and glutamate 177 contribute to the active site.

In terms of assembly, heterodimer of HisH and HisF.

The protein resides in the cytoplasm. The enzyme catalyses 5-[(5-phospho-1-deoxy-D-ribulos-1-ylimino)methylamino]-1-(5-phospho-beta-D-ribosyl)imidazole-4-carboxamide + L-glutamine = D-erythro-1-(imidazol-4-yl)glycerol 3-phosphate + 5-amino-1-(5-phospho-beta-D-ribosyl)imidazole-4-carboxamide + L-glutamate + H(+). It catalyses the reaction L-glutamine + H2O = L-glutamate + NH4(+). Its pathway is amino-acid biosynthesis; L-histidine biosynthesis; L-histidine from 5-phospho-alpha-D-ribose 1-diphosphate: step 5/9. In terms of biological role, IGPS catalyzes the conversion of PRFAR and glutamine to IGP, AICAR and glutamate. The HisH subunit provides the glutamine amidotransferase activity that produces the ammonia necessary to HisF for the synthesis of IGP and AICAR. The protein is Imidazole glycerol phosphate synthase subunit HisH 2 (hisH2) of Campylobacter jejuni subsp. jejuni serotype O:2 (strain ATCC 700819 / NCTC 11168).